Reading from the N-terminus, the 637-residue chain is Protein RRP6-like 1 (637 aa).

One can recognise a 3'-5' exonuclease domain in the interval 118–283 (VEEVKDLEDL…YIYDVMRMEL (166 aa)). The HRDC domain occupies 334–414 (NAVQLSIVAG…RRSMQNAAAF (81 aa)). Over residues 553 to 565 (VDDDDDDDDDESY) the composition is skewed to acidic residues. The tract at residues 553 to 624 (VDDDDDDDDD…EDMRRRSEKH (72 aa)) is disordered. Over residues 580–598 (ETPSKGSPSLTQKPKTCNT) the composition is skewed to polar residues. Over residues 602–614 (VLDDDDDSESRED) the composition is skewed to acidic residues.

It is found in the nucleus. Its subcellular location is the nucleoplasm. In terms of biological role, acts as an important epigenetic regulator through multiple silencing mechanisms. Involved in transcriptional gene silencing (TGS). Plays a role for DNA methylation in the RNA-directed DNA methylation (RdDM) pathway. Contributes to the methylation status of the retrotransposon SN1. Required for DNA methylation only at a subset of RdDM target loci. Plays a regulatory role in RdDM through retention of non-coding RNAs (ncRNAs) in normal cells. Helps to retain Pol V-transcribed RNAs in chromatin to enable their scaffold function and is required for genome-wide Pol IV-dependent siRNA (24 nt siRNA) production that may involve retention of Pol IV transcripts. Involved in association with RRP6L2 in the silencing of the solo LTR locus. Controls levels of ncRNAs from the solo LTR locus. Seems to function independently of the RdDM pathway. Functions redundantly with RRP6L2 in the regulation of FLC locus. Participates in the maintenance of trimethylated 'Lys-27' (H3K27me3) at FLC locus via the regulation of antisense long non-coding RNAs (lncRNAs) and the regulation of diverse antisense RNAs derived from the FLC locus. Seems not involved in the exosomal RNA degradation. Can complement the growth defect of a yeast mutant lacking RRP6 exonuclease. The polypeptide is Protein RRP6-like 1 (Arabidopsis thaliana (Mouse-ear cress)).